The primary structure comprises 267 residues: Glutamate racemase (267 aa).

Substrate is bound by residues 10–11 (DS) and 42–43 (YG). Residue C73 is the Proton donor/acceptor of the active site. 74–75 (NT) serves as a coordination point for substrate. The active-site Proton donor/acceptor is the C183. 184–185 (TH) is a substrate binding site.

The protein belongs to the aspartate/glutamate racemases family.

The catalysed reaction is L-glutamate = D-glutamate. The protein operates within cell wall biogenesis; peptidoglycan biosynthesis. Functionally, provides the (R)-glutamate required for cell wall biosynthesis. This Lactobacillus helveticus (strain DPC 4571) protein is Glutamate racemase.